The primary structure comprises 72 residues: Translation initiation factor IF-1 2 (72 aa).

Residues 1-72 form the S1-like domain; it reads MSKDDVIEVE…TRGRIVYRYK (72 aa).

The protein belongs to the IF-1 family. Component of the 30S ribosomal translation pre-initiation complex which assembles on the 30S ribosome in the order IF-2 and IF-3, IF-1 and N-formylmethionyl-tRNA(fMet); mRNA recruitment can occur at any time during PIC assembly.

The protein localises to the cytoplasm. In terms of biological role, one of the essential components for the initiation of protein synthesis. Stabilizes the binding of IF-2 and IF-3 on the 30S subunit to which N-formylmethionyl-tRNA(fMet) subsequently binds. Helps modulate mRNA selection, yielding the 30S pre-initiation complex (PIC). Upon addition of the 50S ribosomal subunit IF-1, IF-2 and IF-3 are released leaving the mature 70S translation initiation complex. The polypeptide is Translation initiation factor IF-1 2 (Symbiobacterium thermophilum (strain DSM 24528 / JCM 14929 / IAM 14863 / T)).